The sequence spans 732 residues: E3 ubiquitin-protein ligase DCST1 (732 aa).

The Cytoplasmic portion of the chain corresponds to 1–46; sequence MAFLSSTLHSLGIFEKISRIKEVLKNRLLDLTKRRDQAREQQRKRP. Residues 47 to 67 traverse the membrane as a helical segment; sequence HTIIQGLLLWSLPVSWIRFLW. The Extracellular portion of the chain corresponds to 68–76; it reads RQPGEFPVT. The chain crosses the membrane as a helical span at residues 77–97; the sequence is AFLLGAGTGGLLAIGLFQLLV. Over 98–107 the chain is Cytoplasmic; the sequence is NPMNIYEEQK. Residues 108–128 traverse the membrane as a helical segment; that stretch reads VVALYCLASLGAIGWGTSPHI. The Extracellular portion of the chain corresponds to 129–394; that stretch reads RCASLLLVPK…VRDYVRQQET (266 aa). Residues N184, N217, N346, and N374 are each glycosylated (N-linked (GlcNAc...) asparagine). A helical transmembrane segment spans residues 395 to 415; the sequence is YLQWAMGLLHVLLSCTFLLVF. Over 416-489 the chain is Cytoplasmic; it reads HSAFSYMDHY…RYVIRELLET (74 aa). A helical transmembrane segment spans residues 490–510; it reads LPIVLLLLVLCAIDWALYSVF. At 511–576 the chain is on the extracellular side; that stretch reads DTIRQHSFVQ…PQPISLNARD (66 aa). The N-linked (GlcNAc...) asparagine glycan is linked to N551. The chain crosses the membrane as a helical span at residues 577-597; the sequence is YFKASLPTLLLVCLCLAQAFG. At 598–732 the chain is on the cytoplasmic side; the sequence is YRLRRVIAAF…DSNDDAVYGD (135 aa). Residues 672–711 form an RING-type; degenerate zinc finger; it reads CVVCQAMETPDSYVCPTPDCKALYCRSCWDDMQRLCPVCT.

In terms of assembly, interacts with STAT2; the interaction results in STAT2 'Lys-48'-linked ubiquitination leading to its proteasomal degradation. Interacts with DCST2. In terms of tissue distribution, expressed in testis.

It is found in the cell membrane. It localises to the cytoplasmic vesicle. Its subcellular location is the secretory vesicle. The protein localises to the acrosome membrane. It carries out the reaction S-ubiquitinyl-[E2 ubiquitin-conjugating enzyme]-L-cysteine + [acceptor protein]-L-lysine = [E2 ubiquitin-conjugating enzyme]-L-cysteine + N(6)-ubiquitinyl-[acceptor protein]-L-lysine.. It participates in protein modification; protein ubiquitination. Its function is as follows. E3 ubiquitin-protein ligase which mediates 'Lys-48'-linked ubiquitination of STAT2 and induces its proteasomal degradation thereby negatively regulating type-I-interferon signaling. Functionally, essential sperm cell-surface protein required for sperm-egg fusion and fertilization. The sequence is that of E3 ubiquitin-protein ligase DCST1 (Dcst1) from Mus musculus (Mouse).